A 594-amino-acid polypeptide reads, in one-letter code: Adenine deaminase 1 (594 aa).

The protein belongs to the metallo-dependent hydrolases superfamily. Adenine deaminase family. Mn(2+) serves as cofactor.

It catalyses the reaction adenine + H2O + H(+) = hypoxanthine + NH4(+). The chain is Adenine deaminase 1 from Desulfotalea psychrophila (strain LSv54 / DSM 12343).